Reading from the N-terminus, the 289-residue chain is Phospholipase A1 (289 aa).

The N-terminal stretch at 1–20 (MRAILRGLLPATLLPLAAYA) is a signal peptide. The Periplasmic portion of the chain corresponds to 21–52 (QEATIKEVHDAPAVRGSIIANMLQEHDNPFTL). A beta stranded transmembrane segment spans residues 53–65 (YPYDTNYLIYTNT). The Extracellular portion of the chain corresponds to 66 to 84 (SDLNKEAISTYNWSENARK). A beta stranded transmembrane segment spans residues 85-99 (DEVKFQLSLAFPLWR). Residues 100–105 (GILGPN) lie on the Periplasmic side of the membrane. The beta stranded transmembrane segment at 106–118 (SVLGASYTQKSWW) threads the bilayer. Residues 119–128 (QLSNSKESSP) lie on the Extracellular side of the membrane. S126 serves as a coordination point for Ca(2+). The beta stranded transmembrane segment at 129–148 (FRETNYEPQLFLGFATDYRF) threads the bilayer. Over 149 to 150 (AG) the chain is Periplasmic. The chain crosses the membrane as a beta stranded span at residues 151 to 164 (WTLRDVEMGYNHDS). The active-site Proton acceptor is H162. S164 functions as the Nucleophile in the catalytic mechanism. Residues 165–173 (NGRSDPTSR) lie on the Extracellular side of the membrane. Residues R167 and S172 each coordinate Ca(2+). A beta stranded membrane pass occupies residues 174–186 (SWNRLYTRLMAEN). Over 187-188 (GN) the chain is Periplasmic. Residues 189–198 (WLVEVKPWYV) form a beta stranded membrane-spanning segment. Residues 199–216 (IGSTDDNPDITKYMGYYQ) lie on the Extracellular side of the membrane. D204 contributes to the Ca(2+) binding site. The beta stranded transmembrane segment at 217–223 (LKIGYHL) threads the bilayer. Topologically, residues 224–225 (GE) are periplasmic. The beta stranded transmembrane segment at 226-234 (AVLSAKGQY) threads the bilayer. Residues 235–241 (NWNTGYG) lie on the Extracellular side of the membrane. A beta stranded transmembrane segment spans residues 242 to 250 (GAEVGLSYP). The Periplasmic portion of the chain corresponds to 251-255 (VTKHV). Residues 256–265 (RLYTQVYSGY) traverse the membrane as a beta stranded segment. Topologically, residues 266–274 (GESLIDYNF) are extracellular. A beta stranded transmembrane segment spans residues 275 to 286 (NQTRVGVGVMLN). The Periplasmic segment spans residues 287–289 (DIF).

It belongs to the phospholipase A1 family. Homodimer; dimerization is reversible, and the dimeric form is the active one. Ca(2+) is required as a cofactor.

The protein resides in the cell outer membrane. The catalysed reaction is a 1,2-diacyl-sn-glycero-3-phosphocholine + H2O = a 2-acyl-sn-glycero-3-phosphocholine + a fatty acid + H(+). The enzyme catalyses a 1,2-diacyl-sn-glycero-3-phosphocholine + H2O = a 1-acyl-sn-glycero-3-phosphocholine + a fatty acid + H(+). Hydrolysis of phosphatidylcholine with phospholipase A2 (EC 3.1.1.4) and phospholipase A1 (EC 3.1.1.32) activities. In Salmonella typhi, this protein is Phospholipase A1 (pldA).